The following is a 535-amino-acid chain: Sucrose transport protein SUT5 (535 aa).

Topologically, residues 1–53 (MEEGRRGDREAKSAAGWTALSTTKTTLEEKRRLQANGSVGGDAGTSGFRRIVR) are cytoplasmic. A helical transmembrane segment spans residues 54-74 (LFFACMVAGGIQYGWALQLSL). The Extracellular portion of the chain corresponds to 75–87 (LSPYSQTLGISHS). Residues 88-108 (YVSLTWICGPIAGFVVQPIVG) form a helical membrane-spanning segment. The Cytoplasmic portion of the chain corresponds to 109-122 (YYSDRCTMKMGRRR). The helical transmembrane segment at 123 to 143 (PFILVGCLIICISVMIIGFSA) threads the bilayer. Topologically, residues 144–163 (DIGRHLGDTKEHCSTYTGPR) are extracellular. The helical transmembrane segment at 164–184 (WSAAMVYIVGFWFLDFANNTV) threads the bilayer. The Cytoplasmic segment spans residues 185–203 (QGPARAMMADLSAGHHGPN). A helical transmembrane segment spans residues 204–224 (VGQSIFSLWMAIGSVLGYLSG). At 225-249 (ANGKWHEWFPWLKTAACCDACANLK) the chain is on the extracellular side. A helical membrane pass occupies residues 250-270 (GAFFTAVLLIVVSMTVTMYLA). Topologically, residues 271–302 (DEMPLDKQDVDTSGGGGCAVFVDLFKSLRNLP) are cytoplasmic. Residues 303–323 (PAMFKVLAVTAVTWLSWFPFI) form a helical membrane-spanning segment. Over 324–354 (QYNTDWMGREIYHGEPQGTAAKADVYDAGVR) the chain is Extracellular. The helical transmembrane segment at 355–375 (EGAMGLLFCSVALGVTSFVIP) threads the bilayer. At 376 to 384 (KLCRRLTSK) the chain is on the cytoplasmic side. Residues 385–405 (VVWSISNFLVFALMAVMVAVG) form a helical membrane-spanning segment. Residues 406–429 (MVSMRGYRPSLAAGLTGPDPTLKA) lie on the Extracellular side of the membrane. Residues 430-450 (VALVVFALIGIPQAVLFSVPW) form a helical membrane-spanning segment. The Cytoplasmic segment spans residues 451–465 (AVASEVTAEEGGGQG). The helical transmembrane segment at 466-486 (LAIGVLNIAIVVPQLVIALTA) threads the bilayer. Residues 487–498 (GPIDGAFNKGNT) lie on the Extracellular side of the membrane. A helical transmembrane segment spans residues 499 to 519 (PAFGIGGAFAFICGVLALIWL). Over 520-535 (PKTRGVSNAAVVAGGH) the chain is Cytoplasmic.

It belongs to the glycoside-pentoside-hexuronide (GPH) cation symporter transporter (TC 2.A.2.4) family. Homodimer.

It localises to the cell membrane. It functions in the pathway glycan biosynthesis; sucrose metabolism. Responsible for the transport of sucrose into the cell, with the concomitant uptake of protons (symport system). May also transport other glucosides. In Oryza sativa subsp. indica (Rice), this protein is Sucrose transport protein SUT5 (SUT5).